The primary structure comprises 192 residues: Ion-translocating oxidoreductase complex subunit A (192 aa).

The next 6 helical transmembrane spans lie at 5–25 (LLLLISTVLVNNFVLVKFLGL), 39–59 (IGMSMATTFVLTLASILSYLV), 65–85 (LPFDLGYLRTMSFILVIAVVV), 102–122 (ALGIYLPLITTNCAVLGVALL), 134–154 (AIYGFGAAVGFSLVLILFSAM), and 171–191 (AIAMITAGLMSLAFMGFTGLV).

Belongs to the NqrDE/RnfAE family. The complex is composed of six subunits: RnfA, RnfB, RnfC, RnfD, RnfE and RnfG.

It is found in the cell inner membrane. In terms of biological role, part of a membrane-bound complex that couples electron transfer with translocation of ions across the membrane. This is Ion-translocating oxidoreductase complex subunit A from Shewanella sp. (strain MR-4).